The chain runs to 284 residues: MAELVPFAVPIESDKTLLVWELSSGPTAEALHHSLFTAFSQFGLLYSVRVFPNAAVAHPGFYAVIKFYSARAAHRAQKACDRKQLFQKSPVKVRLGTRHKAVQHQALALNSSKCQELANYYFGFNGCSKRIIKLQELSDLEERENEDSMVPLPKQSLKFFCALEVVLPSCDCRSPGIGLVEEPMDKVEEGPLSFLMKRKTAQKLAIQKALSDAFQKLLIVVLESGKIAVEYRPSEDIVGVRCEEELHGLIQVPCSPWKQYGQEEEGYLSDFSLEEEEFRLPELD.

The tract at residues 1 to 92 (MAELVPFAVP…KQLFQKSPVK (92 aa)) is necessary for nuclear localization and for nucleolar accumulation in response to heat shock. The region spanning 15–98 (KTLLVWELSS…SPVKVRLGTR (84 aa)) is the RRM domain. The interval 90-133 (PVKVRLGTRHKAVQHQALALNSSKCQELANYYFGFNGCSKRIIK) is necessary for nuclear and nucleolar localization.

As to quaternary structure, homodimer. As to expression, expressed in testis.

The protein localises to the nucleus. It localises to the cytoplasm. Its subcellular location is the nucleolus. It is found in the PML body. The protein resides in the cajal body. In terms of biological role, may confer resistance to the antitumor agent cisplatin. Binds to DNA and RNA. This is RAD52 motif-containing protein 1 (RDM1) from Homo sapiens (Human).